Consider the following 229-residue polypeptide: Uracil-DNA glycosylase (229 aa).

Asp-72 functions as the Proton acceptor in the catalytic mechanism.

The protein belongs to the uracil-DNA glycosylase (UDG) superfamily. UNG family.

The protein localises to the cytoplasm. It catalyses the reaction Hydrolyzes single-stranded DNA or mismatched double-stranded DNA and polynucleotides, releasing free uracil.. In terms of biological role, excises uracil residues from the DNA which can arise as a result of misincorporation of dUMP residues by DNA polymerase or due to deamination of cytosine. This is Uracil-DNA glycosylase from Dichelobacter nodosus (strain VCS1703A).